We begin with the raw amino-acid sequence, 420 residues long: UDP-N-acetylmuramoylalanine--D-glutamate ligase (420 aa).

109–115 contributes to the ATP binding site; sequence GSVGKST.

Belongs to the MurCDEF family.

Its subcellular location is the cytoplasm. The enzyme catalyses UDP-N-acetyl-alpha-D-muramoyl-L-alanine + D-glutamate + ATP = UDP-N-acetyl-alpha-D-muramoyl-L-alanyl-D-glutamate + ADP + phosphate + H(+). It participates in cell wall biogenesis; peptidoglycan biosynthesis. In terms of biological role, cell wall formation. Catalyzes the addition of glutamate to the nucleotide precursor UDP-N-acetylmuramoyl-L-alanine (UMA). The sequence is that of UDP-N-acetylmuramoylalanine--D-glutamate ligase from Fervidobacterium nodosum (strain ATCC 35602 / DSM 5306 / Rt17-B1).